A 290-amino-acid chain; its full sequence is 3-keto-disaccharide hydrolase (290 aa).

An N-terminal signal peptide occupies residues 1 to 19 (MKKVFYPLACCLAAGVLVS). Residue Cys-20 is the site of N-palmitoyl cysteine attachment. Cys-20 is lipidated: S-diacylglycerol cysteine.

Its subcellular location is the cell membrane. The catalysed reaction is 3-dehydro-alpha,alpha-trehalose + H2O = 3-dehydro-D-glucose + D-glucose. 3-keto-disaccharide hydrolase that preferentially hydrolyzes 3-keto-trehalose (3-dehydro-alpha,alpha-trehalose). Important for disaccharide utilization in the human gut. Also shows hydrolysis activity with the glucosinolates glucoraphanin or glucobrassicin, but with much lower efficiency. In Bacteroides thetaiotaomicron (strain ATCC 29148 / DSM 2079 / JCM 5827 / CCUG 10774 / NCTC 10582 / VPI-5482 / E50), this protein is 3-keto-disaccharide hydrolase.